The chain runs to 443 residues: Xaa-Pro dipeptidase (443 aa).

The Mn(2+) site is built by Asp-246, Asp-257, His-339, Glu-384, and Glu-423.

This sequence belongs to the peptidase M24B family. Bacterial-type prolidase subfamily. Requires Mn(2+) as cofactor.

The enzyme catalyses Xaa-L-Pro dipeptide + H2O = an L-alpha-amino acid + L-proline. In terms of biological role, splits dipeptides with a prolyl residue in the C-terminal position. This Citrobacter koseri (strain ATCC BAA-895 / CDC 4225-83 / SGSC4696) protein is Xaa-Pro dipeptidase.